Reading from the N-terminus, the 1170-residue chain is Thrombospondin-1 (1170 aa).

A signal peptide spans 1–18 (MGLAWGLGVLFLMHVCGT). The tract at residues 47–95 (RLVKGPDPSSPAFRIEDANLIPPVPDDKFQDLVDAVRAEKGFLLLASLR) is heparin-binding. The Laminin G-like domain occupies 65–270 (NLIPPVPDDK…HKTKDLQAIC (206 aa)). Cys171 and Cys232 are oxidised to a cystine. Asn248 and Asn360 each carry an N-linked (GlcNAc...) asparagine glycan. One can recognise a VWFC domain in the interval 316-373 (PLCYHNGVQYRNNEEWTVDSCTECHCQNSVTICKKVSCPIMPCSNATVPDGECCPRCW). TSP type-1 domains follow at residues 379–429 (DDGW…QECD), 435–490 (DGGW…DACP), and 492–547 (NGGW…QDCP). The C-linked (Man) tryptophan glycan is linked to Trp385. 3 disulfide bridges follow: Cys391–Cys423, Cys395–Cys428, and Cys406–Cys413. An O-linked (Fuc...) serine glycan is attached at Ser394. C-linked (Man) tryptophan glycosylation is found at Trp438 and Trp441. 3 disulfide bridges follow: Cys447–Cys484, Cys451–Cys489, and Cys462–Cys474. O-linked (Fuc...) threonine glycosylation is present at Thr450. Trp498 is a glycosylation site (C-linked (Man) tryptophan). Cystine bridges form between Cys504/Cys541, Cys508/Cys546, Cys519/Cys531, Cys551/Cys562, Cys556/Cys572, Cys575/Cys586, Cys592/Cys608, Cys599/Cys617, Cys620/Cys644, Cys650/Cys663, Cys657/Cys676, Cys678/Cys689, Cys705/Cys713, Cys718/Cys738, Cys754/Cys774, Cys777/Cys797, Cys813/Cys833, Cys836/Cys856, Cys874/Cys894, Cys910/Cys930, and Cys946/Cys1167. Thr507 carries an O-linked (Fuc...) threonine glycan. The segment at 531 to 1152 (CVGDVTENQI…YAGGRLGLFV (622 aa)) is involved in retention in extracellular matrix (ECM); involved in trimer formation. An EGF-like 1 domain is found at 547–587 (PIDGCLSNPCFAGVKCTSYPDGSWKCGACPPGYSGNGIQCT). Residue Ser553 is glycosylated (O-linked (Xyl) serine). Residues 646-690 (PRNPCTDGTHDCNKNAKCNYLGHYSDPMYRCECKPGYAGNGIICG) form the EGF-like 2 domain. TSP type-3 repeat units follow at residues 691-726 (EDTDLDGWPNENLVCVANATYHCKKDNCPNLPNSGQ), 727-762 (EDYDKDGIGDACDDDDDNDKIPDDRDNCPFHYNPAQ), 763-785 (YDYDRDDVGDRCDNCPYNHNPDQ), 786-821 (ADTDNNGEGDACAADIDGDGILNERDNCQYVYNVDQ), 822-844 (RDTDMDGVGDQCDNCPLEHNPDQ), 845-882 (LDSDSDRIGDTCDNNQDIDEDGHQNNLDNCPYVPNANQ), 883-918 (ADHDKDGKGDACDHDDDNDGIPDDKDNCRLVPNPDQ), and 919-954 (KDSDGDGRGDACKDDFDHDSVPDIDDICPENVDISE). Asn708 is a glycosylation site (N-linked (GlcNAc...) asparagine). The interval 839 to 934 (EHNPDQLDSD…GRGDACKDDF (96 aa)) is disordered. 3 stretches are compositionally biased toward basic and acidic residues: residues 840–854 (HNPDQLDSDSDRIGD), 883–894 (ADHDKDGKGDAC), and 917–934 (DQKDSDGDGRGDACKDDF). Positions 926 to 928 (RGD) match the Cell attachment site motif. The TSP C-terminal domain occupies 958-1170 (RRFQMIPLDP…SDLKYECRDP (213 aa)). Asn1067 is a glycosylation site (N-linked (GlcNAc...) asparagine).

Belongs to the thrombospondin family. Homotrimer; disulfide-linked. Can bind to fibrinogen, fibronectin, laminin, type V collagen and integrins alpha-V/beta-1, alpha-V/beta-3 and alpha-IIb/beta-3. Binds heparin. Interacts (via the C-terminal domain) with CD47. Interacts (via the TSP type I repeats) with CD36; the interaction conveys an antiangiogenic effect. Interacts (via the TSP type I repeats) with HRG; the interaction blocks the antiangiogenic effect of THBS1 with CD36. Interacts with ATF6 (via lumenal domain). Interacts with FN1; this interaction is enhanced by TNFAIP6, which may act as a bridging molecule between FN1 and THBS1. Interacts with SIRPA; the interaction stimulates phosphorylation of SIRPA. In terms of tissue distribution, expressed by platelets (at protein level). Expressed by monocyte-derived immature and mature dendritic cells (at protein level).

The protein resides in the secreted. The protein localises to the cell surface. It is found in the extracellular space. It localises to the extracellular matrix. Its subcellular location is the endoplasmic reticulum. The protein resides in the sarcoplasmic reticulum. Its function is as follows. Adhesive glycoprotein that mediates cell-to-cell and cell-to-matrix interactions. Multifunctional, involved in inflammation, angiogenesis, wound healing, reactive oxygen species (ROS) signaling, nitrous oxide (NO) signaling, apoptosis, senescence, aging, cellular self-renewal, stemness, and cardiovascular and metabolic homeostasis. Negatively modulates dendritic cell activation and cytokine release, as part of an autocrine feedback loop, contributing to the resolution of inflammation and immune homeostasis. Ligand for receptor CD47. Modulates nitrous oxide (NO) signaling via CD47, hence playing a role as a pressor agent, supporting blood pressure. Plays a role in endothelial cell senescence, acting via CD47, by increasing the abundance and activation of NADPH oxidase NOX1, and so generating excess ROS. Inhibits stem cell self-renewal, acting via CD47 signaling, probably by regulation of the stem cell transcription factors POU5F1/OCT4, SOX2, MYC/c-Myc and KLF4. Negatively modulates wound healing, acting via CD47. Ligand for receptor CD36. Involved in inducing apoptosis in podocytes in response to elevated free fatty acids, acting via CD36. Plays a role in suppressing angiogenesis, acting, depending on context, via CD36 or CD47. Promotes cellular senescence in a TP53-CDKN1A-RB1 signaling-dependent manner. Ligand for immunoglobulin-like cell surface receptor SIRPA. Involved in ROS signaling in non-phagocytic cells, stimulating NADPH oxidase-derived ROS production, acting via interaction with SIRPA. Plays a role in metabolic dysfunction in diet-induced obesity, perhaps acting by exacerbating adipose inflammatory activity; its effects may be mediated, at least in part, through enhanced adipocyte proliferation. Plays a role in ER stress response, via its interaction with the activating transcription factor 6 alpha (ATF6) which produces adaptive ER stress response factors. May be involved in age-related conditions, including metabolic dysregulation, during normal aging. In Homo sapiens (Human), this protein is Thrombospondin-1.